The chain runs to 80 residues: Growth factor (80 aa).

The first 19 residues, methionine 1–alanine 19, serve as a signal peptide directing secretion. One can recognise an EGF-like domain in the interval histidine 29–glutamine 73. 3 cysteine pairs are disulfide-bonded: cysteine 33/cysteine 47, cysteine 41/cysteine 61, and cysteine 63/cysteine 72. N-linked (GlcNAc...) asparagine; by host glycans are attached at residues asparagine 44 and asparagine 54.

The protein resides in the secreted. The sequence is that of Growth factor from Oryctolagus cuniculus (Rabbit).